Here is a 348-residue protein sequence, read N- to C-terminus: Protein RecA (348 aa).

64–71 (GPESSGKT) contributes to the ATP binding site. Residues 325–335 (YEIDGASKEPL) show a composition bias toward basic and acidic residues. The disordered stretch occupies residues 325 to 348 (YEIDGASKEPLEETEETLSLLDDE). A compositionally biased stretch (acidic residues) spans 336–348 (EETEETLSLLDDE).

It belongs to the RecA family.

Its subcellular location is the cytoplasm. Functionally, can catalyze the hydrolysis of ATP in the presence of single-stranded DNA, the ATP-dependent uptake of single-stranded DNA by duplex DNA, and the ATP-dependent hybridization of homologous single-stranded DNAs. It interacts with LexA causing its activation and leading to its autocatalytic cleavage. This Listeria seeligeri protein is Protein RecA.